A 186-amino-acid polypeptide reads, in one-letter code: MISSNDFRTGTTIELDGAVWRVIEFLHVKPGKGSAFVRTKLKAVQSGSVVEKTFRAGEMVPQALLEKTTLQHTYMDSGDYVFMDMSSYEETRLTAAQIGESRKYLTEGMEVNVVSWNERPLEVELPNSVVLTVKETDPGVKGDTATGGTKPAILETGAQVMVPLFISVGEKIKVDTRNDSYLGREN.

It belongs to the elongation factor P family.

It localises to the cytoplasm. It functions in the pathway protein biosynthesis; polypeptide chain elongation. In terms of biological role, involved in peptide bond synthesis. Stimulates efficient translation and peptide-bond synthesis on native or reconstituted 70S ribosomes in vitro. Probably functions indirectly by altering the affinity of the ribosome for aminoacyl-tRNA, thus increasing their reactivity as acceptors for peptidyl transferase. This chain is Elongation factor P, found in Prochlorococcus marinus (strain MIT 9211).